The primary structure comprises 420 residues: Enolase (420 aa).

Glutamine 162 contributes to the (2R)-2-phosphoglycerate binding site. Glutamate 206 (proton donor) is an active-site residue. Aspartate 241, glutamate 282, and aspartate 308 together coordinate Mg(2+). (2R)-2-phosphoglycerate-binding residues include lysine 333, arginine 362, serine 363, and lysine 384. The active-site Proton acceptor is the lysine 333.

This sequence belongs to the enolase family. Mg(2+) serves as cofactor.

The protein resides in the cytoplasm. The protein localises to the secreted. It is found in the cell surface. The enzyme catalyses (2R)-2-phosphoglycerate = phosphoenolpyruvate + H2O. Its pathway is carbohydrate degradation; glycolysis; pyruvate from D-glyceraldehyde 3-phosphate: step 4/5. In terms of biological role, catalyzes the reversible conversion of 2-phosphoglycerate (2-PG) into phosphoenolpyruvate (PEP). It is essential for the degradation of carbohydrates via glycolysis. This chain is Enolase, found in Methanothrix thermoacetophila (strain DSM 6194 / JCM 14653 / NBRC 101360 / PT) (Methanosaeta thermophila).